Here is a 1823-residue protein sequence, read N- to C-terminus: WD repeat-containing protein DDB_G0292056 (1823 aa).

The tract at residues 1 to 68 (MTYNNNNNYL…IGNSSGGGGV (68 aa)) is disordered. Positions 16–61 (TSTSTSTSTSTPTSTKTSPLNTSSSSNILKSNSRNPSPNNPTNIGN) are enriched in low complexity. 6 WD repeats span residues 138–177 (QSKW…YPLL), 182–222 (SHQR…KAVK), 228–267 (SHIL…QELN), 270–310 (VHSA…PKST), 312–354 (ITSN…YSTP), and 360–405 (GHTD…KDLF). Disordered stretches follow at residues 418-461 (PTTT…LLST), 530-562 (QPDD…NNNN), 649-687 (NITE…GFLK), 714-778 (IDIS…YRPG), 805-840 (ILTN…TNDQ), 883-940 (IPNN…SSTS), 966-996 (SSSS…NPPR), 1014-1058 (NNIT…NDNP), and 1122-1186 (QQLV…NGKS). Composition is skewed to low complexity over residues 419–432 (TTTT…TTTT) and 440–461 (LNES…LLST). Composition is skewed to low complexity over residues 654 to 680 (NNNN…NNNN) and 717 to 748 (SQQQ…QQQQ). 2 stretches are compositionally biased toward polar residues: residues 749–768 (FLTA…SPTS) and 827–840 (MNAS…TNDQ). Composition is skewed to low complexity over residues 885–926 (NNNK…SSNN), 966–993 (SSSS…KNIN), 1014–1041 (NNIT…NRLN), and 1127–1183 (SSSP…NNGN). The stretch at 1207–1250 (ANSYILSGKPVEEICKYNSELAEKENRKDLVKLWNTLGMITDSK) is one WD 7 repeat. Disordered stretches follow at residues 1264-1307 (SHFG…LHQS), 1697-1725 (QQQP…HTHN), and 1764-1823 (PQQE…MFSN). Positions 1282–1293 (STGIASSTGSNS) are enriched in low complexity. Positions 1710–1725 (MSGTSHYHQQQPHTHN) are enriched in polar residues.

The protein is WD repeat-containing protein DDB_G0292056 of Dictyostelium discoideum (Social amoeba).